The chain runs to 334 residues: ABC transporter L-arabinose-binding periplasmic protein (334 aa).

The first 30 residues, 1 to 30 (MNRTIRRHTLRALLAALCIAPLGMQGAARA), serve as a signal peptide directing secretion.

It belongs to the bacterial solute-binding protein 2 family. As to quaternary structure, the complex is composed of two ATP-binding proteins (AraG), two transmembrane proteins (AraH) and a solute-binding protein (AraF).

Its subcellular location is the periplasm. Part of the ABC transporter complex AraFGH involved in L-arabinose import. Binds with high affinity to L-arabinose. The sequence is that of ABC transporter L-arabinose-binding periplasmic protein (araF) from Azospirillum brasilense.